A 435-amino-acid chain; its full sequence is GTPase Der (435 aa).

EngA-type G domains lie at 8–169 (NLVA…NFEN) and 176–351 (FKIA…NNLS). GTP is bound by residues 14-21 (GKPNVGKS), 61-65 (DTGGI), 123-126 (NKLD), 182-189 (GKPNAGKS), 229-233 (DTAGI), and 294-297 (NKWD). In terms of domain architecture, KH-like spans 352-435 (REIKQNLLND…PINLVLKKNK (84 aa)).

It belongs to the TRAFAC class TrmE-Era-EngA-EngB-Septin-like GTPase superfamily. EngA (Der) GTPase family. As to quaternary structure, associates with the 50S ribosomal subunit.

In terms of biological role, GTPase that plays an essential role in the late steps of ribosome biogenesis. This Mycoplasmopsis pulmonis (strain UAB CTIP) (Mycoplasma pulmonis) protein is GTPase Der.